A 142-amino-acid polypeptide reads, in one-letter code: Large ribosomal subunit protein uL13 (142 aa).

It belongs to the universal ribosomal protein uL13 family. As to quaternary structure, part of the 50S ribosomal subunit.

Functionally, this protein is one of the early assembly proteins of the 50S ribosomal subunit, although it is not seen to bind rRNA by itself. It is important during the early stages of 50S assembly. The sequence is that of Large ribosomal subunit protein uL13 from Shewanella frigidimarina (strain NCIMB 400).